Here is a 170-residue protein sequence, read N- to C-terminus: Large ribosomal subunit protein uL11 (170 aa).

The protein belongs to the universal ribosomal protein uL11 family. As to quaternary structure, part of the ribosomal stalk of the 50S ribosomal subunit. Interacts with L10 and the large rRNA to form the base of the stalk. L10 forms an elongated spine to which L12 dimers bind in a sequential fashion forming a multimeric L10(L12)X complex.

Functionally, forms part of the ribosomal stalk which helps the ribosome interact with GTP-bound translation factors. The sequence is that of Large ribosomal subunit protein uL11 from Sulfolobus acidocaldarius (strain ATCC 33909 / DSM 639 / JCM 8929 / NBRC 15157 / NCIMB 11770).